Consider the following 156-residue polypeptide: MNFNATLIGQTVAFIIFVWFCMKFVWPPLMNAIEARQKRIADGLADADRAVKDLELAQAKATDQLKEAKVTANEIIEQANKRKAQIVEEAKTEADAERAKIIAQGKAEIEAERNRVKEDLRKQVATLAIMGAEKILERSIDPAAHSDIVNKLVAEI.

Residues L7–P27 form a helical membrane-spanning segment.

It belongs to the ATPase B chain family. As to quaternary structure, F-type ATPases have 2 components, F(1) - the catalytic core - and F(0) - the membrane proton channel. F(1) has five subunits: alpha(3), beta(3), gamma(1), delta(1), epsilon(1). F(0) has three main subunits: a(1), b(2) and c(10-14). The alpha and beta chains form an alternating ring which encloses part of the gamma chain. F(1) is attached to F(0) by a central stalk formed by the gamma and epsilon chains, while a peripheral stalk is formed by the delta and b chains.

Its subcellular location is the cell inner membrane. Functionally, f(1)F(0) ATP synthase produces ATP from ADP in the presence of a proton or sodium gradient. F-type ATPases consist of two structural domains, F(1) containing the extramembraneous catalytic core and F(0) containing the membrane proton channel, linked together by a central stalk and a peripheral stalk. During catalysis, ATP synthesis in the catalytic domain of F(1) is coupled via a rotary mechanism of the central stalk subunits to proton translocation. In terms of biological role, component of the F(0) channel, it forms part of the peripheral stalk, linking F(1) to F(0). The protein is ATP synthase subunit b of Shewanella oneidensis (strain ATCC 700550 / JCM 31522 / CIP 106686 / LMG 19005 / NCIMB 14063 / MR-1).